Reading from the N-terminus, the 271-residue chain is Ribosomal RNA small subunit methyltransferase A (271 aa).

Residues L20, G45, E66, D90, and N112 each coordinate S-adenosyl-L-methionine.

The protein belongs to the class I-like SAM-binding methyltransferase superfamily. rRNA adenine N(6)-methyltransferase family. RsmA subfamily.

The protein localises to the cytoplasm. The enzyme catalyses adenosine(1518)/adenosine(1519) in 16S rRNA + 4 S-adenosyl-L-methionine = N(6)-dimethyladenosine(1518)/N(6)-dimethyladenosine(1519) in 16S rRNA + 4 S-adenosyl-L-homocysteine + 4 H(+). Its function is as follows. Specifically dimethylates two adjacent adenosines (A1518 and A1519) in the loop of a conserved hairpin near the 3'-end of 16S rRNA in the 30S particle. May play a critical role in biogenesis of 30S subunits. The sequence is that of Ribosomal RNA small subunit methyltransferase A from Blochmanniella floridana.